A 348-amino-acid polypeptide reads, in one-letter code: Histidinol-phosphate aminotransferase (348 aa).

Lys-210 is subject to N6-(pyridoxal phosphate)lysine.

It belongs to the class-II pyridoxal-phosphate-dependent aminotransferase family. Histidinol-phosphate aminotransferase subfamily. As to quaternary structure, homodimer. Pyridoxal 5'-phosphate is required as a cofactor.

It catalyses the reaction L-histidinol phosphate + 2-oxoglutarate = 3-(imidazol-4-yl)-2-oxopropyl phosphate + L-glutamate. It participates in amino-acid biosynthesis; L-histidine biosynthesis; L-histidine from 5-phospho-alpha-D-ribose 1-diphosphate: step 7/9. The sequence is that of Histidinol-phosphate aminotransferase from Cytophaga hutchinsonii (strain ATCC 33406 / DSM 1761 / CIP 103989 / NBRC 15051 / NCIMB 9469 / D465).